Reading from the N-terminus, the 386-residue chain is Glucose-1-phosphate adenylyltransferase (386 aa).

Residues Tyr100, Gly165, Glu180–Lys181, and Ser191 each bind alpha-D-glucose 1-phosphate.

This sequence belongs to the bacterial/plant glucose-1-phosphate adenylyltransferase family. As to quaternary structure, homotetramer.

The enzyme catalyses alpha-D-glucose 1-phosphate + ATP + H(+) = ADP-alpha-D-glucose + diphosphate. Its pathway is glycan biosynthesis; glycogen biosynthesis. Functionally, involved in the biosynthesis of ADP-glucose, a building block required for the elongation reactions to produce glycogen. Catalyzes the reaction between ATP and alpha-D-glucose 1-phosphate (G1P) to produce pyrophosphate and ADP-Glc. The protein is Glucose-1-phosphate adenylyltransferase of Clostridium botulinum (strain Alaska E43 / Type E3).